We begin with the raw amino-acid sequence, 217 residues long: Peptide deformylase (217 aa).

Residues Cys-91 and His-133 each coordinate Fe cation. Glu-134 is a catalytic residue. His-137 is a Fe cation binding site. The disordered stretch occupies residues 153–217 (VSEDGEEEEE…RRGSAAAKEE (65 aa)). The span at 155–176 (EDGEEEEEAEVAEVMPEPEAEG) shows a compositional bias: acidic residues. Low complexity predominate over residues 177 to 192 (AGEPSAEGAGQAAAEA). Residues 206 to 217 (GERRGSAAAKEE) show a composition bias toward basic and acidic residues.

Belongs to the polypeptide deformylase family. It depends on Fe(2+) as a cofactor.

The catalysed reaction is N-terminal N-formyl-L-methionyl-[peptide] + H2O = N-terminal L-methionyl-[peptide] + formate. Its function is as follows. Removes the formyl group from the N-terminal Met of newly synthesized proteins. Requires at least a dipeptide for an efficient rate of reaction. N-terminal L-methionine is a prerequisite for activity but the enzyme has broad specificity at other positions. The protein is Peptide deformylase of Symbiobacterium thermophilum (strain DSM 24528 / JCM 14929 / IAM 14863 / T).